A 129-amino-acid polypeptide reads, in one-letter code: Small ribosomal subunit protein uS11 (129 aa).

Belongs to the universal ribosomal protein uS11 family. Part of the 30S ribosomal subunit. Interacts with proteins S7 and S18. Binds to IF-3.

In terms of biological role, located on the platform of the 30S subunit, it bridges several disparate RNA helices of the 16S rRNA. Forms part of the Shine-Dalgarno cleft in the 70S ribosome. This Glaesserella parasuis serovar 5 (strain SH0165) (Haemophilus parasuis) protein is Small ribosomal subunit protein uS11.